The primary structure comprises 254 residues: Glucosamine-6-phosphate deaminase (254 aa).

Asp67 functions as the Proton acceptor; for enolization step in the catalytic mechanism. Asn136 serves as the catalytic For ring-opening step. The Proton acceptor; for ring-opening step role is filled by His138. Glu143 (for ring-opening step) is an active-site residue.

Belongs to the glucosamine/galactosamine-6-phosphate isomerase family. NagB subfamily.

It carries out the reaction alpha-D-glucosamine 6-phosphate + H2O = beta-D-fructose 6-phosphate + NH4(+). Its pathway is amino-sugar metabolism; N-acetylneuraminate degradation; D-fructose 6-phosphate from N-acetylneuraminate: step 5/5. Catalyzes the reversible isomerization-deamination of glucosamine 6-phosphate (GlcN6P) to form fructose 6-phosphate (Fru6P) and ammonium ion. The polypeptide is Glucosamine-6-phosphate deaminase (Brevibacillus brevis (strain 47 / JCM 6285 / NBRC 100599)).